Reading from the N-terminus, the 180-residue chain is Ribulose bisphosphate carboxylase small subunit 1A, chloroplastic (180 aa).

A chloroplast-targeting transit peptide spans 1–54 (MASSMLSSATMVASPAQATMVAPFNGLKSSAAFPATRKANNDITSITSNGGRVN). S113 carries the phosphoserine modification.

This sequence belongs to the RuBisCO small chain family. As to quaternary structure, heterohexadecamer of 8 large and 8 small subunits.

It localises to the plastid. Its subcellular location is the chloroplast membrane. The protein resides in the chloroplast stroma. In terms of biological role, ruBisCO catalyzes two reactions: the carboxylation of D-ribulose 1,5-bisphosphate, the primary event in carbon dioxide fixation, as well as the oxidative fragmentation of the pentose substrate. Both reactions occur simultaneously and in competition at the same active site. Although the small subunit is not catalytic it is essential for maximal activity. The chain is Ribulose bisphosphate carboxylase small subunit 1A, chloroplastic (RBCS-1A) from Arabidopsis thaliana (Mouse-ear cress).